Reading from the N-terminus, the 1221-residue chain is Adhesion G-protein coupled receptor G6 (1221 aa).

The N-terminal stretch at 1 to 37 is a signal peptide; the sequence is MMFRSDRMWSCHWKWKPSPLLFLFALYIMCVPHSVWG. At 38–862 the chain is on the extracellular side; it reads CANCRVVLSN…ASQLDARNTK (825 aa). An intrachain disulfide couples C41 to C67. Residues 41–149 enclose the CUB domain; the sequence is CRVVLSNPSG…KGFNASYIRV (109 aa). Ca(2+) contacts are provided by E89 and D97. C94 and C111 are joined by a disulfide. An N-linked (GlcNAc...) asparagine glycan is attached at N121. Positions 134, 136, and 137 each coordinate Ca(2+). N-linked (GlcNAc...) asparagine glycans are attached at residues N143, N206, N258, N314, N324, N353, N438, N445, N452, N485, N488, and N505. The Pentraxin (PTX) domain occupies 154–356; the sequence is RNQKVILPQT…ALKAESNLSC (203 aa). Intrachain disulfides connect C186-C254 and C231-C277. The tract at residues 473 to 837 is mediates interaction with laminin-2; the sequence is EPRLVLWALL…SDASETVCLC (365 aa). 2 cysteine pairs are disulfide-bonded: C525/C560 and C548/C580. N-linked (GlcNAc...) asparagine glycosylation is found at N563, N593, N600, N605, N667, N673, N695, N704, N750, N776, N811, and N818. Residues 670–853 form the GAIN-B domain; that stretch reads SHVNITTRNL…GVLMDLPRSA (184 aa). 2 cysteine pairs are disulfide-bonded: C803–C835 and C822–C837. Positions 803 to 853 are GPS; sequence CAFWDLNKNKSFGGWNTSGCVAHRDSDASETVCLCNHFTHFGVLMDLPRSA. The interval 842-850 is stachel; the sequence is HFGVLMDLP. A helical membrane pass occupies residues 863–883; the sequence is VLTFISYIGCGISAIFSAATL. At 884–903 the chain is on the cytoplasmic side; sequence LTYVAFEKLRRDYPSKILMN. A helical membrane pass occupies residues 904 to 924; it reads LSTALLFLNLLFLLDGWITSF. Residues 925–929 lie on the Extracellular side of the membrane; sequence NVDGL. Residues 930-950 traverse the membrane as a helical segment; it reads CIAVAVLLHFFLLATFTWMGL. The Cytoplasmic portion of the chain corresponds to 951–970; sequence EAIHMYIALVKVFNTYIRRY. A helical membrane pass occupies residues 971 to 991; sequence ILKFCIIGWGLPALVVSVVLA. The Extracellular segment spans residues 992-1024; it reads SRNNNEVYGKESYGKEKGDEFCWIQDPVIFYVT. Residues 1025-1045 form a helical membrane-spanning segment; that stretch reads CAGYFGVMFFLNIAMFIVVMV. The Cytoplasmic portion of the chain corresponds to 1046-1069; sequence QICGRNGKRSNRTLREEVLRNLRS. Residues 1070 to 1090 traverse the membrane as a helical segment; it reads VVSLTFLLGMTWGFAFFAWGP. Topologically, residues 1091–1092 are extracellular; sequence LN. Residues 1093–1113 traverse the membrane as a helical segment; the sequence is IPFMYLFSIFNSLQGLFIFIF. N1103 contacts 17alpha-hydroxyprogesterone. Residues 1114–1221 are Cytoplasmic-facing; that stretch reads HCAMKENVQK…GQVLVKTGPC (108 aa). A disordered region spans residues 1156–1176; that stretch reads NLGKSLSSSSIGSNSTYLTSK. 2 positions are modified to phosphoserine: S1165 and S1168.

Belongs to the G-protein coupled receptor 2 family. Adhesion G-protein coupled receptor (ADGR) subfamily. Heterodimer of 2 chains generated by proteolytic processing; the large extracellular N-terminal fragment and the membrane-bound C-terminal fragment predominantly remain associated and non-covalently linked. Interacts with Laminin-2; this interaction stabilizes the receptor in an inactive state. Laminin-2 polymerization could facilitate ADGRG6-NTF removal, thereby exposing the tethered agonist to drive myelination. Interacts with PRNP. Interacts with ITGB1. Interacts with LRP1. Post-translationally, proteolytically cleaved into 2 conserved sites: one in the GPS region of the GAIN-B domain (S1 site) and the other in the middle of the extracellular domain (S2 site). The proteolytic cleavage at S1 site generates an extracellular subunit and a seven-transmembrane subunit. Furin is involved in the cleavage of the S2 site generating a soluble fragment. Processing at the GPS region occurred independent of and probably prior to the cleavage at the S2 site. Proteolytic cleavage is required for activation of the receptor. Highly glycosylated. In terms of tissue distribution, expressed in placenta and to a lower extent in pancreas and liver. Detected in aortic endothelial cells but not in skin microvascular endothelial cells.

The protein localises to the cell membrane. Its activity is regulated as follows. Forms a heterodimer of 2 chains generated by proteolytic processing that remain associated through non-covalent interactions mediated by the GAIN-B domain. In the inactivated receptor, the Stachel sequence (also named stalk) is embedded in the GAIN-B domain, where it adopts a beta-strand conformation. On activation, the Stachel moves into the 7 transmembrane region and adopts a twisted hook-shaped configuration that forms contacts within the receptor, leading to coupling of a G-alpha protein, which activates signaling. The cleaved GAIN-B and N-terminal domains can then dissociate from the rest of the receptor. In terms of biological role, adhesion G-protein coupled receptor (aGPCR) for steroid hormones, such as progesterone and 17alpha-hydroxyprogesterone (17OHP). Involved in many biological processes, such as myelination, sprouting angiogenesis, placenta, ear and cartilage development. Ligand binding causes a conformation change that triggers signaling via guanine nucleotide-binding proteins (G proteins) and modulates the activity of downstream effectors, such as adenylate cyclase. ADGRG6 is coupled to G(i) G alpha proteins and mediates inhibition of adenylate cyclase. Also able to couple to G(q) G proteins. Involved in myelination of the peripheral nervous system: required for differentiation of promyelinating Schwann cells and for normal myelination of axons. Also acts as a regulator of body length and bone mass. Acts as a regulator of blood-brain barrier formation in the central nervous system vie its association with LRP1 and ITGB1. In Homo sapiens (Human), this protein is Adhesion G-protein coupled receptor G6.